A 603-amino-acid polypeptide reads, in one-letter code: Isocitrate dehydrogenase kinase/phosphatase (603 aa).

Residues 327–333 (APGIKGL) and K348 each bind ATP. D383 is an active-site residue.

Belongs to the AceK family.

The protein localises to the cytoplasm. The enzyme catalyses L-seryl-[isocitrate dehydrogenase] + ATP = O-phospho-L-seryl-[isocitrate dehydrogenase] + ADP + H(+). Bifunctional enzyme which can phosphorylate or dephosphorylate isocitrate dehydrogenase (IDH) on a specific serine residue. This is a regulatory mechanism which enables bacteria to bypass the Krebs cycle via the glyoxylate shunt in response to the source of carbon. When bacteria are grown on glucose, IDH is fully active and unphosphorylated, but when grown on acetate or ethanol, the activity of IDH declines drastically concomitant with its phosphorylation. This is Isocitrate dehydrogenase kinase/phosphatase from Burkholderia thailandensis (strain ATCC 700388 / DSM 13276 / CCUG 48851 / CIP 106301 / E264).